The following is a 587-amino-acid chain: Glutathione hydrolase proenzyme (587 aa).

An N-terminal signal peptide occupies residues 1–28 (MKRTWNVCLTALLSVLLVAGSVPFHAEA). Residues 29-35 (KKPPKSY) constitute a propeptide that is removed on maturation. Arginine 113 is a binding site for L-glutamate. Threonine 403 serves as the catalytic Nucleophile. L-glutamate is bound by residues threonine 421, glutamate 423, glutamate 442, aspartate 445, 464–465 (SS), and 485–486 (GG).

Belongs to the gamma-glutamyltransferase family. As to quaternary structure, this enzyme consists of two polypeptide chains, which are synthesized in precursor form from a single polypeptide. In terms of processing, cleaved by autocatalysis into a large and a small subunit.

It localises to the secreted. The catalysed reaction is an N-terminal (5-L-glutamyl)-[peptide] + an alpha-amino acid = 5-L-glutamyl amino acid + an N-terminal L-alpha-aminoacyl-[peptide]. It catalyses the reaction glutathione + H2O = L-cysteinylglycine + L-glutamate. It carries out the reaction an S-substituted glutathione + H2O = an S-substituted L-cysteinylglycine + L-glutamate. The protein operates within sulfur metabolism; glutathione metabolism. Its function is as follows. Cleaves the gamma-glutamyl bond of extracellular glutathione (gamma-Glu-Cys-Gly), glutathione conjugates, and other gamma-glutamyl compounds. The metabolism of glutathione releases free glutamate and the dipeptide cysteinyl-glycine, which is hydrolyzed to cysteine and glycine by dipeptidases. In Bacillus subtilis (strain 168), this protein is Glutathione hydrolase proenzyme (ggt).